The following is a 297-amino-acid chain: Small ribosomal subunit protein uS2 (297 aa).

Positions glycine 266–tryptophan 297 are disordered. The span at alanine 282–tryptophan 297 shows a compositional bias: low complexity.

Belongs to the universal ribosomal protein uS2 family. As to quaternary structure, component of the small ribosomal subunit. Mature ribosomes consist of a small (40S) and a large (60S) subunit. The 40S subunit contains about 33 different proteins and 1 molecule of RNA (18S). The 60S subunit contains about 49 different proteins and 3 molecules of RNA (25S, 5.8S and 5S). Interacts with rps21.

It is found in the cytoplasm. In terms of biological role, required for the assembly and/or stability of the 40S ribosomal subunit. Required for the processing of the 20S rRNA-precursor to mature 18S rRNA in a late step of the maturation of 40S ribosomal subunits. The sequence is that of Small ribosomal subunit protein uS2 (rps0) from Sclerotinia sclerotiorum (strain ATCC 18683 / 1980 / Ss-1) (White mold).